The chain runs to 127 residues: Protein ApaG (127 aa).

In terms of domain architecture, ApaG spans 3–127 (DADVYAISVE…FVLAIPRTLH (125 aa)).

The protein is Protein ApaG of Stenotrophomonas maltophilia (strain K279a).